The chain runs to 696 residues: DNA-directed RNA polymerase subunit beta' (696 aa).

Zn(2+) is bound by residues Cys76, Cys78, Cys94, and Cys97. Asp496, Asp498, and Asp500 together coordinate Mg(2+).

It belongs to the RNA polymerase beta' chain family. RpoC1 subfamily. In plastids the minimal PEP RNA polymerase catalytic core is composed of four subunits: alpha, beta, beta', and beta''. When a (nuclear-encoded) sigma factor is associated with the core the holoenzyme is formed, which can initiate transcription. The cofactor is Mg(2+). Zn(2+) is required as a cofactor.

It is found in the plastid. The protein resides in the chloroplast. It catalyses the reaction RNA(n) + a ribonucleoside 5'-triphosphate = RNA(n+1) + diphosphate. Its function is as follows. DNA-dependent RNA polymerase catalyzes the transcription of DNA into RNA using the four ribonucleoside triphosphates as substrates. In Guizotia abyssinica (Niger), this protein is DNA-directed RNA polymerase subunit beta'.